Reading from the N-terminus, the 231-residue chain is Small ribosomal subunit protein uS2 (231 aa).

It belongs to the universal ribosomal protein uS2 family.

In Blochmanniella floridana, this protein is Small ribosomal subunit protein uS2.